Here is a 342-residue protein sequence, read N- to C-terminus: Farnesyl pyrophosphate synthase 1 (342 aa).

Isopentenyl diphosphate is bound by residues K47, R50, and Q86. Mg(2+) contacts are provided by D93 and D97. Dimethylallyl diphosphate is bound at residue R102. R103 is a binding site for isopentenyl diphosphate. Residues K190, T191, Q229, K246, and K255 each coordinate dimethylallyl diphosphate.

This sequence belongs to the FPP/GGPP synthase family. Mg(2+) is required as a cofactor.

It localises to the cytoplasm. The catalysed reaction is isopentenyl diphosphate + dimethylallyl diphosphate = (2E)-geranyl diphosphate + diphosphate. It catalyses the reaction isopentenyl diphosphate + (2E)-geranyl diphosphate = (2E,6E)-farnesyl diphosphate + diphosphate. It functions in the pathway isoprenoid biosynthesis; farnesyl diphosphate biosynthesis; farnesyl diphosphate from geranyl diphosphate and isopentenyl diphosphate: step 1/1. The protein operates within isoprenoid biosynthesis; geranyl diphosphate biosynthesis; geranyl diphosphate from dimethylallyl diphosphate and isopentenyl diphosphate: step 1/1. In terms of biological role, catalyzes the sequential condensation of isopentenyl pyrophosphate with the allylic pyrophosphates, dimethylallyl pyrophosphate, and then with the resultant geranylpyrophosphate to the ultimate product farnesyl pyrophosphate. This Lupinus albus (White lupine) protein is Farnesyl pyrophosphate synthase 1 (FPS1).